A 235-amino-acid polypeptide reads, in one-letter code: (5-formylfuran-3-yl)methyl phosphate synthase (235 aa).

The active-site Schiff-base intermediate with substrate is the K27. K85 serves as the catalytic Proton acceptor.

The protein belongs to the MfnB family.

It carries out the reaction 2 D-glyceraldehyde 3-phosphate = 4-(hydroxymethyl)-2-furancarboxaldehyde phosphate + phosphate + 2 H2O. The protein operates within cofactor biosynthesis; methanofuran biosynthesis. In terms of biological role, catalyzes the formation of 4-(hydroxymethyl)-2-furancarboxaldehyde phosphate (4-HFC-P) from two molecules of glyceraldehyde-3-P (GA-3-P). This Methanococcus aeolicus (strain ATCC BAA-1280 / DSM 17508 / OCM 812 / Nankai-3) protein is (5-formylfuran-3-yl)methyl phosphate synthase.